A 585-amino-acid chain; its full sequence is Glucose oxidase-like protein fsoC (585 aa).

Ala104 contacts FAD. His521 functions as the Proton donor in the catalytic mechanism. The active-site Proton acceptor is His564.

This sequence belongs to the GMC oxidoreductase family. Monomer. FAD is required as a cofactor.

In terms of biological role, glucose oxidase-like protein; part of the gene cluster that mediates the biosynthesis of the enfumafungin-type antibiotic fuscoatroside. Four enzymes are sufficient to produce fuscoatroside: the terpene cyclase-glycosyl transferase fusion protein fsoAthe cytochrome P450 monoxygenases fsoD and fsoE, and the acetyltransferase fsoF; the cytochrome P450 monooxygenase fsoB and the glucose oxidase-like protein fsoC do not seem to play a role in biosynthesis of fuscoatroside. Glucose oxidase; part of the gene cluster that mediates the biosynthesis of the enfumafungin-type antibiotic, fuscoatroside. The chain is Glucose oxidase-like protein fsoC from Humicola fuscoatra.